The sequence spans 266 residues: MSRIAQAFQRAQAQNRAAFIAYLCAGDPNFDTSLAACRAVITSGVDLLELGVPFSDPLADGLTNQLAAQRALESGMTAADVFRLVRRIREFSEVPIVFYTYYNLVFAHGIDAYVRAAKEAGVDGLLTLDLPPEESDEVSAACRAHGVQSVYIVAPTSPAERIAKIAQAATGFIYYVSREGVTGVQERVAANIPEAVAAIRRHTALPVVVGFGISNREQVRQVAAVADGVVVGSALVNCIRENLGSPERITAKLAAVAGDLVAGTKR.

Catalysis depends on proton acceptor residues E49 and D60.

The protein belongs to the TrpA family. Tetramer of two alpha and two beta chains.

It catalyses the reaction (1S,2R)-1-C-(indol-3-yl)glycerol 3-phosphate + L-serine = D-glyceraldehyde 3-phosphate + L-tryptophan + H2O. Its pathway is amino-acid biosynthesis; L-tryptophan biosynthesis; L-tryptophan from chorismate: step 5/5. Its function is as follows. The alpha subunit is responsible for the aldol cleavage of indoleglycerol phosphate to indole and glyceraldehyde 3-phosphate. The sequence is that of Tryptophan synthase alpha chain from Opitutus terrae (strain DSM 11246 / JCM 15787 / PB90-1).